The sequence spans 208 residues: Large ribosomal subunit protein uL4 (208 aa).

Residues 45–89 (RQGTHAHKNRSAVSGGGKKPWRQKGTGRARQGSTRSPQWRGGGTV) are disordered.

It belongs to the universal ribosomal protein uL4 family. Part of the 50S ribosomal subunit.

One of the primary rRNA binding proteins, this protein initially binds near the 5'-end of the 23S rRNA. It is important during the early stages of 50S assembly. It makes multiple contacts with different domains of the 23S rRNA in the assembled 50S subunit and ribosome. Its function is as follows. Forms part of the polypeptide exit tunnel. This is Large ribosomal subunit protein uL4 from Lactococcus lactis subsp. cremoris (strain SK11).